The following is a 182-amino-acid chain: Ribulose bisphosphate carboxylase small subunit, chloroplastic (182 aa).

A chloroplast-targeting transit peptide spans 1-58 (MASSMLSTATVASINRVSPAQATMVAPFTGLKSTPVFPTTRKTNSDITSITSNGGKVQ).

Belongs to the RuBisCO small chain family. Heterohexadecamer of 8 large and 8 small subunits.

The protein resides in the plastid. It is found in the chloroplast. RuBisCO catalyzes two reactions: the carboxylation of D-ribulose 1,5-bisphosphate, the primary event in carbon dioxide fixation, as well as the oxidative fragmentation of the pentose substrate. Both reactions occur simultaneously and in competition at the same active site. Although the small subunit is not catalytic it is essential for maximal activity. This is Ribulose bisphosphate carboxylase small subunit, chloroplastic from Manihot esculenta (Cassava).